A 180-amino-acid chain; its full sequence is ATP-dependent protease subunit HslV (180 aa).

Threonine 5 is an active-site residue. Na(+)-binding residues include glycine 161, cysteine 164, and threonine 167.

Belongs to the peptidase T1B family. HslV subfamily. A double ring-shaped homohexamer of HslV is capped on each side by a ring-shaped HslU homohexamer. The assembly of the HslU/HslV complex is dependent on binding of ATP.

Its subcellular location is the cytoplasm. It catalyses the reaction ATP-dependent cleavage of peptide bonds with broad specificity.. Allosterically activated by HslU binding. In terms of biological role, protease subunit of a proteasome-like degradation complex believed to be a general protein degrading machinery. The chain is ATP-dependent protease subunit HslV from Campylobacter fetus subsp. fetus (strain 82-40).